The sequence spans 245 residues: ATP synthase subunit a (245 aa).

7 consecutive transmembrane segments (helical) span residues 5–25 (LWFT…MMSV), 37–57 (ISNY…FFIA), 99–119 (YIVT…IPGF), 125–145 (FPSV…VHGL), 157–177 (FLGP…CSHF), 187–209 (LYAN…PLGF), and 221–241 (SLIQ…EATA).

Belongs to the ATPase A chain family. In terms of assembly, F-type ATPases have 2 components, CF(1) - the catalytic core - and CF(0) - the membrane proton channel. CF(1) has five subunits: alpha(3), beta(3), gamma(1), delta(1), epsilon(1). CF(0) has three main subunits: a(1), b(2) and c(9-12). The alpha and beta chains form an alternating ring which encloses part of the gamma chain. CF(1) is attached to CF(0) by a central stalk formed by the gamma and epsilon chains, while a peripheral stalk is formed by the delta and b chains.

Its subcellular location is the cell inner membrane. In terms of biological role, key component of the proton channel; it plays a direct role in the translocation of protons across the membrane. This chain is ATP synthase subunit a, found in Koribacter versatilis (strain Ellin345).